A 94-amino-acid polypeptide reads, in one-letter code: Phosphoribosyl-ATP pyrophosphatase (94 aa).

The protein belongs to the PRA-PH family.

It localises to the cytoplasm. The enzyme catalyses 1-(5-phospho-beta-D-ribosyl)-ATP + H2O = 1-(5-phospho-beta-D-ribosyl)-5'-AMP + diphosphate + H(+). It participates in amino-acid biosynthesis; L-histidine biosynthesis; L-histidine from 5-phospho-alpha-D-ribose 1-diphosphate: step 2/9. This is Phosphoribosyl-ATP pyrophosphatase from Pyrobaculum arsenaticum (strain DSM 13514 / JCM 11321 / PZ6).